Reading from the N-terminus, the 375-residue chain is Tyrosine--tRNA ligase (375 aa).

L-tyrosine-binding residues include tyrosine 37, tyrosine 168, glutamine 172, aspartate 175, and glutamine 190. The 'KMSKS' region signature appears at 251–255 (KMSKS). Lysine 254 is a binding site for ATP.

This sequence belongs to the class-I aminoacyl-tRNA synthetase family. TyrS type 4 subfamily. In terms of assembly, homodimer.

It is found in the cytoplasm. The catalysed reaction is tRNA(Tyr) + L-tyrosine + ATP = L-tyrosyl-tRNA(Tyr) + AMP + diphosphate + H(+). In terms of biological role, catalyzes the attachment of tyrosine to tRNA(Tyr) in a two-step reaction: tyrosine is first activated by ATP to form Tyr-AMP and then transferred to the acceptor end of tRNA(Tyr). The protein is Tyrosine--tRNA ligase of Thermococcus sibiricus (strain DSM 12597 / MM 739).